A 377-amino-acid chain; its full sequence is Proteinase-activated receptor 3 (377 aa).

An N-terminal signal peptide occupies residues 1-19 (MRAAIFAAIGALLLSPASC). The propeptide at 20-38 (QSGMEYDADNLAKPTLSIK) is removed for receptor activation. The Extracellular segment spans residues 39–94 (TFRGAPQNSFEEFPLSAIEGWTGTTKTVKIKCPEELDSNLHVNNATMGYLSSPLST). A glycan (N-linked (GlcNAc...) asparagine) is linked at Asn82. A helical transmembrane segment spans residues 95–120 (KLIPAIYILVFAVGMPANAVTLWMLF). Residues 121 to 127 (RTRTIRM) are Cytoplasmic-facing. Residues 128–147 (TIFYTNLAIADFLFCVTLPF) traverse the membrane as a helical segment. Residues 148–166 (RIAYHLNGNNWVFGEVMCR) lie on the Extracellular side of the membrane. Cys165 and Cys244 are oxidised to a cystine. A helical transmembrane segment spans residues 167–188 (ATTVIFYGNMYCSILLLACISI). At 189-205 (NRYLAIVHPFTYRGLPK) the chain is on the cytoplasmic side. The chain crosses the membrane as a helical span at residues 206-229 (RTYALLTCGLVWTTVFLYMLPFFI). The Extracellular portion of the chain corresponds to 230-259 (LKQEYYLVQQDITTCHDVHNTCESSSPFQL). A helical membrane pass occupies residues 260–279 (YYFISLAFFGFLIPFLVIIY). The Cytoplasmic portion of the chain corresponds to 280–296 (CYTAIIWTLNAKDRRWL). Residues 297 to 321 (WYIKASLLTFVIFTICFAPSNIILI) form a helical membrane-spanning segment. At 322-335 (IHHANYYYSNTDAL) the chain is on the extracellular side. The helical transmembrane segment at 336–360 (YFVYLIALCLGSLNSCLDPFLYFLM) threads the bilayer. Residues 361–377 (SKITDHSTAYLTMVKLS) lie on the Cytoplasmic side of the membrane.

This sequence belongs to the G-protein coupled receptor 1 family. Interacts with INSC/inscuteable and GPSM2. A proteolytic cleavage generates a new N-terminus that functions as a tethered ligand.

The protein localises to the cell membrane. In terms of biological role, receptor for activated thrombin coupled to G proteins that stimulate phosphoinositide hydrolysis. The sequence is that of Proteinase-activated receptor 3 (F2RL2) from Bos taurus (Bovine).